Reading from the N-terminus, the 164-residue chain is Transcriptional repressor NrdR (164 aa).

Residues 3–34 fold into a zinc finger; that stretch reads CPFCSAQDTKVIDSRLVADGVQIRRRRECLSC. The ATP-cone domain occupies 49–139; the sequence is PRLVKTDGTR…VYRSFQDISE (91 aa).

This sequence belongs to the NrdR family. It depends on Zn(2+) as a cofactor.

In terms of biological role, negatively regulates transcription of bacterial ribonucleotide reductase nrd genes and operons by binding to NrdR-boxes. The polypeptide is Transcriptional repressor NrdR (Alcanivorax borkumensis (strain ATCC 700651 / DSM 11573 / NCIMB 13689 / SK2)).